The chain runs to 806 residues: Integrin beta-7 (806 aa).

A signal peptide spans 1-19 (MVDSSTVLIFLLVLGGGQS). Residues 20–724 (ELDTKITSSG…PQEKGVDHTR (705 aa)) are Extracellular-facing. Positions 44–92 (SCQPVPSCQKCILSHPSCAWCKQLNFTASGEAEARRCARREELLARGCP) constitute a PSI domain. Disulfide bonds link Cys51/Cys476, Cys54/Cys80, Cys64/Cys91, Cys216/Cys223, Cys271/Cys311, Cys412/Cys428, Cys448/Cys474, Cys478/Cys497, Cys488/Cys500, Cys502/Cys511, Cys513/Cys545, Cys527/Cys543, Cys537/Cys548, Cys550/Cys559, Cys561/Cys582, Cys566/Cys580, Cys574/Cys585, Cys587/Cys596, Cys598/Cys621, Cys605/Cys619, Cys613/Cys624, Cys626/Cys635, Cys638/Cys641, Cys645/Cys688, Cys651/Cys670, and Cys654/Cys666. Asn68 carries an N-linked (GlcNAc...) asparagine glycan. Over residues 98–107 (EPRGRQEVLQ) the composition is skewed to basic and acidic residues. The disordered stretch occupies residues 98-123 (EPRGRQEVLQDKPLSQGDRGEGATQL). The VWFA domain maps to 150–389 (YPVDLYYLMD…QLIMDAYDSL (240 aa)). Ser161 and Ser163 together coordinate Mg(2+). Residues Ser163, Asp166, Asp167, and Asp198 each contribute to the Ca(2+) site. N-linked (GlcNAc...) asparagine glycosylation is present at Asn250. Ca(2+)-binding residues include Asn254, Asp256, Pro258, and Glu259. Glu259 contacts Mg(2+). Asn279 carries an N-linked (GlcNAc...) asparagine glycan. Ca(2+) is bound by residues Asp289 and Glu373. A glycan (N-linked (GlcNAc...) asparagine) is linked at Asn434. 4 consecutive I-EGF domains span residues 478–512 (CGDA…QLCE), 513–560 (CSEA…RLCE), 561–597 (CDDA…RACE), and 598–636 (CSKS…ALCD). Asn531 carries an N-linked (GlcNAc...) asparagine glycan. An N-linked (GlcNAc...) asparagine glycan is attached at Asn590. Residues Asn665 and Asn674 are each glycosylated (N-linked (GlcNAc...) asparagine). A helical membrane pass occupies residues 725 to 745 (AIILGCTGGIVAVGLGLVLAY). At 746-806 (RLSVEIYDRR…PSLSLTREAD (61 aa)) the chain is on the cytoplasmic side. The tract at residues 786-806 (NPRFQGTNGRSPSLSLTREAD) is disordered.

This sequence belongs to the integrin beta chain family. Heterodimer of an alpha and a beta subunit. ITGB7/beta-7 associates with either ITGA4/alpha-4 or ITGAE/alpha-E. Integrin ITGA4/ITGB7 interacts with MADCAM1. Integrin ITGA4/ITGB7 interacts with VCAM1 and fibronectin. Interacts with FLNA (via filamin repeats 4, 9, 12, 17, 19, 21, and 23).

It localises to the cell membrane. Functionally, integrin ITGA4/ITGB7 (alpha-4/beta-7) (Peyer patches-specific homing receptor LPAM-1) is an adhesion molecule that mediates lymphocyte migration and homing to gut-associated lymphoid tissue (GALT). Integrin ITGA4/ITGB7 interacts with the cell surface adhesion molecules MADCAM1 which is normally expressed by the vascular endothelium of the gastrointestinal tract. Also interacts with VCAM1 and fibronectin, an extracellular matrix component. It recognizes one or more domains within the alternatively spliced CS-1 region of fibronectin. Interactions involve the tripeptide L-D-T in MADCAM1, and L-D-V in fibronectin. Integrin ITGAE/ITGB7 (alpha-E/beta-7, HML-1) is a receptor for E-cadherin. The polypeptide is Integrin beta-7 (Itgb7) (Mus musculus (Mouse)).